The primary structure comprises 349 residues: Small ribosomal subunit protein eS6 (349 aa).

Positions 224–349 (RRRSRLSSMR…AKKEKKQKKK (126 aa)) are disordered. Basic and acidic residues-rich tracts occupy residues 231–251 (SMRD…EKAA) and 260–334 (KKEA…EAAK).

This sequence belongs to the eukaryotic ribosomal protein eS6 family. Component of the small ribosomal subunit. Part of the small subunit (SSU) processome, composed of more than 70 proteins and the RNA chaperone small nucleolar RNA (snoRNA) U3. In terms of processing, ribosomal protein S6 is the major substrate of protein kinases in eukaryote ribosomes.

The protein resides in the cytoplasm. The protein localises to the nucleus. Its subcellular location is the nucleolus. Component of the 40S small ribosomal subunit. Plays an important role in controlling cell growth and proliferation through the selective translation of particular classes of mRNA. Part of the small subunit (SSU) processome, first precursor of the small eukaryotic ribosomal subunit. During the assembly of the SSU processome in the nucleolus, many ribosome biogenesis factors, an RNA chaperone and ribosomal proteins associate with the nascent pre-rRNA and work in concert to generate RNA folding, modifications, rearrangements and cleavage as well as targeted degradation of pre-ribosomal RNA by the RNA exosome. This chain is Small ribosomal subunit protein eS6 (RpS6), found in Aedes albopictus (Asian tiger mosquito).